The following is a 244-amino-acid chain: DNA polymerase sliding clamp (244 aa).

It belongs to the PCNA family. In terms of assembly, homotrimer. The subunits circularize to form a toroid; DNA passes through its center. Replication factor C (RFC) is required to load the toroid on the DNA.

Functionally, sliding clamp subunit that acts as a moving platform for DNA processing. Responsible for tethering the catalytic subunit of DNA polymerase and other proteins to DNA during high-speed replication. The protein is DNA polymerase sliding clamp of Methanothrix thermoacetophila (strain DSM 6194 / JCM 14653 / NBRC 101360 / PT) (Methanosaeta thermophila).